Consider the following 480-residue polypeptide: Aspartyl/glutamyl-tRNA(Asn/Gln) amidotransferase subunit B (480 aa).

Belongs to the GatB/GatE family. GatB subfamily. In terms of assembly, heterotrimer of A, B and C subunits.

The catalysed reaction is L-glutamyl-tRNA(Gln) + L-glutamine + ATP + H2O = L-glutaminyl-tRNA(Gln) + L-glutamate + ADP + phosphate + H(+). It catalyses the reaction L-aspartyl-tRNA(Asn) + L-glutamine + ATP + H2O = L-asparaginyl-tRNA(Asn) + L-glutamate + ADP + phosphate + 2 H(+). Allows the formation of correctly charged Asn-tRNA(Asn) or Gln-tRNA(Gln) through the transamidation of misacylated Asp-tRNA(Asn) or Glu-tRNA(Gln) in organisms which lack either or both of asparaginyl-tRNA or glutaminyl-tRNA synthetases. The reaction takes place in the presence of glutamine and ATP through an activated phospho-Asp-tRNA(Asn) or phospho-Glu-tRNA(Gln). The protein is Aspartyl/glutamyl-tRNA(Asn/Gln) amidotransferase subunit B of Streptococcus thermophilus (strain ATCC BAA-250 / LMG 18311).